A 244-amino-acid chain; its full sequence is L-xylulose reductase (244 aa).

At methionine 1 the chain carries N-acetylmethionine. 11–39 is an NADP(+) binding site; sequence LVTGAGKGIGRSTVLALKAAGAQVVAVSR. Arginine 21 bears the Omega-N-methylarginine mark. A substrate-binding site is contributed by serine 136. The active-site Proton acceptor is tyrosine 149. The active site involves lysine 153.

This sequence belongs to the short-chain dehydrogenases/reductases (SDR) family. As to quaternary structure, homotetramer. As to expression, highly expressed in kidney, liver and epididymis. Expressed at intermediate level in lung. Weakly or not expressed in brain, heart, spleen and testis.

The protein localises to the membrane. The protein resides in the apical cell membrane. It carries out the reaction xylitol + NADP(+) = L-xylulose + NADPH + H(+). Catalyzes the NADPH-dependent reduction of several pentoses, tetroses, trioses, alpha-dicarbonyl compounds and L-xylulose. Participates in the uronate cycle of glucose metabolism. May play a role in the water absorption and cellular osmoregulation in the proximal renal tubules by producing xylitol, an osmolyte, thereby preventing osmolytic stress from occurring in the renal tubules. The polypeptide is L-xylulose reductase (Dcxr) (Mus musculus (Mouse)).